A 1196-amino-acid chain; its full sequence is Probable cation-transporting ATPase 13A4 (1196 aa).

Residues 1–31 (MGHFEKGQHALLNEGEENEMEIFGYRTQGCR) are Cytoplasmic-facing. Residues 32–52 (KSLCLAGSIFSFGILPLVFYW) lie within the membrane without spanning it. The Cytoplasmic segment spans residues 53–197 (RPAWHVWAHC…DVEVTPIWKL (145 aa)). A helical transmembrane segment spans residues 198-218 (LIKEVLNPFYIFQLFSVCLWF). Topologically, residues 219 to 223 (SEDYK) are lumenal. Residues 224–244 (EYAFAIIIMSIISISLTVYDL) traverse the membrane as a helical segment. The Cytoplasmic segment spans residues 245-400 (REQSVKLHHL…NFQLYRDAIR (156 aa)). A helical membrane pass occupies residues 401–421 (FLLCLVGTATIGMIYTLCVYV). Over 422-436 (LSGEPPEEVVRKALD) the chain is Lumenal. A helical transmembrane segment spans residues 437-457 (VITIAVPPALPAALTTGIIYA). The Cytoplasmic portion of the chain corresponds to 458 to 900 (QRRLKKRGIF…KEGRAALVTS (443 aa)). Asp-486 serves as the catalytic 4-aspartylphosphate intermediate. 2 residues coordinate Mg(2+): Asp-848 and Asp-852. A helical membrane pass occupies residues 901 to 921 (FCMFKYMALYSMIQYVGVLLL). The Lumenal portion of the chain corresponds to 922-932 (YWETNSLSNYQ). Residues 933-953 (FLFQDLAITTLIGVTMNLNGA) traverse the membrane as a helical segment. The Cytoplasmic segment spans residues 954-972 (YPKLVPFRPAGRLISPPLL). Residues 973–993 (LSVIFNILLSLAMHIAGFILV) form a helical membrane-spanning segment. Residues 994–1035 (QRQPWYSVEIHSACTVQNESISELTMSPTAPEKMESNSTFTS) are Lumenal-facing. Residues 1036-1056 (FENTTVWFLGTINCITVALVF) form a helical membrane-spanning segment. Over 1057-1070 (SKGKPFRQPTYTNY) the chain is Cytoplasmic. Residues 1071–1091 (IFVLVLIIQLGVCLFILFADI) traverse the membrane as a helical segment. The Lumenal segment spans residues 1092–1109 (PELYRRLDLLCTPVLWRA). Residues 1110 to 1130 (SIVIMLSLNFIVSLVAEEAVI) traverse the membrane as a helical segment. Topologically, residues 1131–1196 (ENRALWMMIK…PVFESNEEQL (66 aa)) are cytoplasmic.

This sequence belongs to the cation transport ATPase (P-type) (TC 3.A.3) family. Type V subfamily. Expressed in heart, placenta, liver, skeletal muscles, and pancreas. Lower levels of expression are also detected in brain, lung and kidney. Weakly expressed in the adult brain. Expression in fetal brain is higher than in adult brain, with levels similar to several other fetal tissues including spleen and skeletal muscle. In adult brain expressed at low levels in all tissues examined, including the temporal lobe and putamen. Highly expressed in the respiratory and integumentary systems.

It is found in the early endosome membrane. The protein resides in the late endosome membrane. Its subcellular location is the recycling endosome membrane. It catalyses the reaction ATP + H2O = ADP + phosphate + H(+). This chain is Probable cation-transporting ATPase 13A4 (ATP13A4), found in Homo sapiens (Human).